The chain runs to 228 residues: Ribulose-phosphate 3-epimerase (228 aa).

Residue Ser9 participates in substrate binding. Positions 34, 36, and 70 each coordinate a divalent metal cation. Asp36 acts as the Proton acceptor in catalysis. Substrate-binding positions include His70, 146 to 149 (GFPG), 179 to 181 (DGG), and 201 to 202 (GS). A divalent metal cation is bound at residue Asp179. The active-site Proton donor is Asp179.

This sequence belongs to the ribulose-phosphate 3-epimerase family. The cofactor is a divalent metal cation.

It carries out the reaction D-ribulose 5-phosphate = D-xylulose 5-phosphate. The protein operates within carbohydrate degradation. In terms of biological role, catalyzes the reversible epimerization of D-ribulose 5-phosphate to D-xylulose 5-phosphate. The chain is Ribulose-phosphate 3-epimerase from Buchnera aphidicola subsp. Baizongia pistaciae (strain Bp).